Here is a 413-residue protein sequence, read N- to C-terminus: Tyrosine--tRNA ligase (413 aa).

The 'HIGH' region motif lies at 55-64 (PTRPDLHLGH). The short motif at 242-246 (KMSKS) is the 'KMSKS' region element. Position 245 (lysine 245) interacts with ATP. The 65-residue stretch at 346–410 (VKLSYILREC…GKKAFRRLVK (65 aa)) folds into the S4 RNA-binding domain.

It belongs to the class-I aminoacyl-tRNA synthetase family. TyrS type 2 subfamily. Homodimer.

It localises to the cytoplasm. The catalysed reaction is tRNA(Tyr) + L-tyrosine + ATP = L-tyrosyl-tRNA(Tyr) + AMP + diphosphate + H(+). Functionally, catalyzes the attachment of tyrosine to tRNA(Tyr) in a two-step reaction: tyrosine is first activated by ATP to form Tyr-AMP and then transferred to the acceptor end of tRNA(Tyr). In Synechococcus sp. (strain JA-2-3B'a(2-13)) (Cyanobacteria bacterium Yellowstone B-Prime), this protein is Tyrosine--tRNA ligase.